The sequence spans 89 residues: MALTTEQKSAILAEYGLHEKDTGSPEAQIALLSKRIADITEHLKKHKHDHHTRHGLMALIGRRKRLSKYLADKDIERYRALIERLGLRR.

It belongs to the universal ribosomal protein uS15 family. Part of the 30S ribosomal subunit. Forms a bridge to the 50S subunit in the 70S ribosome, contacting the 23S rRNA.

In terms of biological role, one of the primary rRNA binding proteins, it binds directly to 16S rRNA where it helps nucleate assembly of the platform of the 30S subunit by binding and bridging several RNA helices of the 16S rRNA. Functionally, forms an intersubunit bridge (bridge B4) with the 23S rRNA of the 50S subunit in the ribosome. This Nocardia farcinica (strain IFM 10152) protein is Small ribosomal subunit protein uS15.